The sequence spans 138 residues: Small ribosomal subunit protein uS11c (138 aa).

The interval 1–23 (MAKPILRIGSRKNTRSGSRKNVR) is disordered. The segment covering 9–23 (GSRKNTRSGSRKNVR) has biased composition (basic residues).

It belongs to the universal ribosomal protein uS11 family. In terms of assembly, part of the 30S ribosomal subunit.

The protein localises to the plastid. The protein resides in the chloroplast. This Barbarea verna (Land cress) protein is Small ribosomal subunit protein uS11c.